The chain runs to 144 residues: Nucleoside diphosphate kinase (144 aa).

ATP-binding residues include K11, F59, R87, T93, R104, and N114. Residue H117 is the Pros-phosphohistidine intermediate of the active site.

Belongs to the NDK family. Homotetramer. The cofactor is Mg(2+).

Its subcellular location is the cytoplasm. The enzyme catalyses a 2'-deoxyribonucleoside 5'-diphosphate + ATP = a 2'-deoxyribonucleoside 5'-triphosphate + ADP. It catalyses the reaction a ribonucleoside 5'-diphosphate + ATP = a ribonucleoside 5'-triphosphate + ADP. Functionally, major role in the synthesis of nucleoside triphosphates other than ATP. The ATP gamma phosphate is transferred to the NDP beta phosphate via a ping-pong mechanism, using a phosphorylated active-site intermediate. The protein is Nucleoside diphosphate kinase of Coxiella burnetii (strain CbuG_Q212) (Coxiella burnetii (strain Q212)).